The primary structure comprises 606 residues: Calmegin (606 aa).

Positions 1-19 are cleaved as a signal peptide; it reads MRFQGFWLCLGLLFISVNA. At 20–466 the chain is on the lumenal side; the sequence is EFMDDSVEME…QLMSATEQRP (447 aa). At Lys-124 the chain carries N6-acetyllysine. A disulfide bridge connects residues Cys-147 and Cys-181. A disordered region spans residues 255–308; sequence PPINPPKEIEDPTDEKPDDWDERAKIPDASAVKPEDWDESEPPQIVDSSAVKPD. 8 tandem repeats follow at residues 263 to 276, 280 to 293, 299 to 312, 318 to 331, 335 to 348, 352 to 365, 366 to 379, and 380 to 393. Positions 265 to 275 are enriched in acidic residues; sequence DPTDEKPDDWD. Residues 313 to 346 are interaction with PPIB; the sequence is NEPEFIPDPNAEKPFDWNEDMDGEWEAPHISNPA. A disulfide bond links Cys-347 and Cys-351. The helical transmembrane segment at 467–487 threads the bilayer; that stretch reads WLWFIYLLTAALPIALIGSFC. Residues 488–606 are Cytoplasmic-facing; that stretch reads WPRKVKKKYE…SVRKRRVRKE (119 aa). Basic and acidic residues predominate over residues 518-544; sequence EVKEEKAALEKPVDLEEEKKQSDGEIV. The disordered stretch occupies residues 518–606; sequence EVKEEKAALE…SVRKRRVRKE (89 aa). Positions 545-567 are enriched in acidic residues; that stretch reads EKEEEGEPEEKSEEEIEIIEGQE. A phosphoserine mark is found at Ser-556, Ser-572, Ser-575, Ser-577, Ser-587, Ser-590, and Ser-597. The span at 568–579 shows a compositional bias: basic and acidic residues; it reads EGNKSNKSGSED. The segment covering 597–606 has biased composition (basic residues); it reads SVRKRRVRKE.

This sequence belongs to the calreticulin family. Interacts with PPIB and PDILT. Interacts with ADAM2.

Its subcellular location is the endoplasmic reticulum membrane. In terms of biological role, functions during spermatogenesis as a chaperone for a range of client proteins that are important for sperm adhesion onto the egg zona pellucida and for subsequent penetration of the zona pellucida. Required for normal sperm migration from the uterus into the oviduct. Required for normal male fertility. Binds calcium ions. In Bos taurus (Bovine), this protein is Calmegin (CLGN).